The chain runs to 114 residues: Vacuolar morphogenesis protein 10 (114 aa).

It localises to the vacuole membrane. In terms of biological role, required for vacuolar fusion. Involved in the early steps of the fusion pathway. The chain is Vacuolar morphogenesis protein 10 (VAM10) from Saccharomyces cerevisiae (strain ATCC 204508 / S288c) (Baker's yeast).